We begin with the raw amino-acid sequence, 287 residues long: Deoxyuridine 5'-triphosphate nucleotidohydrolase (287 aa).

173 to 175 (RSG) contributes to the substrate binding site. A compositionally biased stretch (low complexity) spans 264 to 275 (SSSKDTSDSQMS). The tract at residues 264–287 (SSSKDTSDSQMSRGDAGLGSSGLM) is disordered.

It belongs to the dUTPase family. Mg(2+) is required as a cofactor.

The catalysed reaction is dUTP + H2O = dUMP + diphosphate + H(+). Involved in nucleotide metabolism: produces dUMP, the immediate precursor of thymidine nucleotides and decreases the intracellular concentration of dUTP to avoid uracil incorporation into viral DNA. In Saimiriine herpesvirus 2 (strain 11) (SaHV-2), this protein is Deoxyuridine 5'-triphosphate nucleotidohydrolase.